Reading from the N-terminus, the 664-residue chain is Cyclic nucleotide-gated channel alpha-2 (664 aa).

Positions Met1 to Val20 are enriched in polar residues. The tract at residues Met1–Glu49 is disordered. At Met1 to Leu144 the chain is on the cytoplasmic side. Residues Phe145–Asp166 form a helical membrane-spanning segment. At Leu167–Leu176 the chain is on the extracellular side. A helical transmembrane segment spans residues Val177–Gly197. The Cytoplasmic segment spans residues Phe198–Lys222. A helical membrane pass occupies residues Leu223 to His241. Residues Asn242–Arg246 lie on the Extracellular side of the membrane. A helical transmembrane segment spans residues Phe247–Thr265. Topologically, residues Arg266–Ile272 are cytoplasmic. Residues Pro270 to Met378 are ion conduction pathway. Residues Phe273–Ile296 form a helical membrane-spanning segment. At Ser297 to Tyr319 the chain is on the extracellular side. Transmembrane regions (helical) follow at residues Leu320–Ile354 and Phe355–Asn379. The segment at Thr337–Glu340 is selectivity filter. A C-linker region spans residues Ala380–Gln456. The Cytoplasmic portion of the chain corresponds to Ala380–Pro664. Residues Ala460 to Lys580 are cyclic nucleotide-binding domain. 3',5'-cyclic GMP is bound by residues Gly520, Ser523, Arg536, and Thr537. Positions 536 and 537 each coordinate 3',5'-cyclic AMP. A coiled-coil region spans residues Val597–Asp651. The disordered stretch occupies residues Thr644–Pro664.

It belongs to the cyclic nucleotide-gated cation channel (TC 1.A.1.5) family. CNGA2 subfamily. As to quaternary structure, the olfactory cyclic nucleotide-gated channel is an heterotetramer composed of CNGA2, CNGA4 and CNGB1b subunits with 2:1:1 stoichiometry.

It localises to the cell projection. It is found in the cilium membrane. The catalysed reaction is Ca(2+)(in) = Ca(2+)(out). The enzyme catalyses Na(+)(in) = Na(+)(out). It catalyses the reaction K(+)(in) = K(+)(out). It carries out the reaction NH4(+)(in) = NH4(+)(out). The catalysed reaction is Rb(+)(in) = Rb(+)(out). The enzyme catalyses Li(+)(in) = Li(+)(out). It catalyses the reaction Cs(+)(in) = Cs(+)(out). In terms of biological role, pore-forming subunit of the olfactory cyclic nucleotide-gated channel. Operates in the cilia of olfactory sensory neurons where chemical stimulation of the odorant is converted to an electrical signal. Mediates odorant-induced cAMP-dependent Ca(2+) influx triggering neuron depolarization. The rise of intracellular Ca(2+) levels potentiates the olfactory response by activating Ca(2+)-dependent Cl(-) channels, but it also serves as a negative feedback signal to desensitize the channel for rapid adaptation to odorants. Conducts cAMP- and cGMP-gated ion currents, with permeability for monovalent and divalent cations. The polypeptide is Cyclic nucleotide-gated channel alpha-2 (Oryctolagus cuniculus (Rabbit)).